We begin with the raw amino-acid sequence, 25 residues long: Pregnancy-associated glycoprotein 59g (25 aa).

The N-linked (GlcNAc...) asparagine glycan is linked to asparagine 4.

Belongs to the peptidase A1 family. In terms of tissue distribution, highly expressed in the placenta between day 60 and day 100 of gestation.

It is found in the secreted. Its subcellular location is the extracellular space. This Ovis aries (Sheep) protein is Pregnancy-associated glycoprotein 59g.